We begin with the raw amino-acid sequence, 369 residues long: 4-hydroxyproline betaine 2-epimerase (369 aa).

Residues Y56 and Q162 each coordinate substrate. The Proton donor/acceptor role is filled by K164. Residues D194, E219, and D242 each coordinate Mg(2+). The Proton donor/acceptor role is filled by K266. A295 is a substrate binding site.

It belongs to the mandelate racemase/muconate lactonizing enzyme family. The cofactor is Mg(2+).

It catalyses the reaction trans-4-hydroxy-L-proline betaine = cis-4-hydroxy-D-proline betaine. The catalysed reaction is L-proline betaine = D-proline betaine. Functionally, catalyzes the 2-epimerization of trans-4-hydroxy-L-proline betaine (tHyp-B) to cis-4-hydroxy-D-proline betaine (cHyp-B). Is involved in a catabolic pathway that degrades tHyp-B to alpha-ketoglutarate. This pathway would permit the utilization of tHyp-B as a carbon and nitrogen source in the absence of osmotic stress, since tHyp-B functions as an osmolyte and is not catabolized when it is needed as osmoprotectant. Can also catalyze the racemization of L-proline betaine. This chain is 4-hydroxyproline betaine 2-epimerase (hpbD), found in Paracoccus denitrificans (strain Pd 1222).